Reading from the N-terminus, the 928-residue chain is Serine/threonine-protein kinase atg1 (928 aa).

In terms of domain architecture, Protein kinase spans 6–315 (YTRLDEIGRG…FPEFFENEVI (310 aa)). Residues 12 to 20 (IGRGSFATV) and Lys-35 contribute to the ATP site. Residue Asp-149 is the Proton acceptor of the active site. 2 disordered regions span residues 318–470 (PIPG…EQER) and 544–571 (FSGR…PTSA). A compositionally biased stretch (basic and acidic residues) spans 359-371 (TRREREVNREDVY). Residues 437-452 (TTTAIERQRSRNTYSE) are compositionally biased toward polar residues. Basic and acidic residues-rich tracts occupy residues 459–470 (QPADKLKEEQER) and 548–564 (SRAD…ERRY).

Belongs to the protein kinase superfamily. Ser/Thr protein kinase family. APG1/unc-51/ULK1 subfamily. As to quaternary structure, homodimer. Forms a ternary complex with ATG13 and ATG17.

It is found in the cytoplasm. The protein resides in the preautophagosomal structure membrane. It carries out the reaction L-seryl-[protein] + ATP = O-phospho-L-seryl-[protein] + ADP + H(+). The catalysed reaction is L-threonyl-[protein] + ATP = O-phospho-L-threonyl-[protein] + ADP + H(+). Serine/threonine protein kinase involved in the cytoplasm to vacuole transport (Cvt) and found to be essential in autophagy, where it is required for the formation of autophagosomes. Involved in the clearance of protein aggregates which cannot be efficiently cleared by the proteasome. Required for selective autophagic degradation of the nucleus (nucleophagy) as well as for mitophagy which contributes to regulate mitochondrial quantity and quality by eliminating the mitochondria to a basal level to fulfill cellular energy requirements and preventing excess ROS production. Also involved in endoplasmic reticulum-specific autophagic process, in selective removal of ER-associated degradation (ERAD) substrates. Plays a key role in ATG9 and ATG23 cycling through the pre-autophagosomal structure and is necessary to promote ATG18 binding to ATG9 through phosphorylation of ATG9. Catalyzes phosphorylation of ATG4, decreasing the interaction between ATG4 and ATG8 and impairing deconjugation of PE-conjugated forms of ATG8. The polypeptide is Serine/threonine-protein kinase atg1 (Aspergillus clavatus (strain ATCC 1007 / CBS 513.65 / DSM 816 / NCTC 3887 / NRRL 1 / QM 1276 / 107)).